A 94-amino-acid chain; its full sequence is Ribonuclease VapC3 (94 aa).

Aspartate 6 provides a ligand contact to Mg(2+).

This sequence belongs to the PINc/VapC protein family. Mg(2+) serves as cofactor.

Its function is as follows. Toxic component of a type II toxin-antitoxin (TA) system. An RNase. Its cognate antitoxin is VapB3. The sequence is that of Ribonuclease VapC3 (vapC3) from Methanocaldococcus jannaschii (strain ATCC 43067 / DSM 2661 / JAL-1 / JCM 10045 / NBRC 100440) (Methanococcus jannaschii).